We begin with the raw amino-acid sequence, 177 residues long: Inorganic pyrophosphatase (177 aa).

Residues lysine 29, arginine 43, and tyrosine 55 each contribute to the substrate site. Positions 65, 70, and 102 each coordinate Mg(2+). Tyrosine 141 contributes to the substrate binding site.

The protein belongs to the PPase family. Homohexamer. Mg(2+) serves as cofactor.

The protein resides in the cytoplasm. The catalysed reaction is diphosphate + H2O = 2 phosphate + H(+). Functionally, catalyzes the hydrolysis of inorganic pyrophosphate (PPi) forming two phosphate ions. The sequence is that of Inorganic pyrophosphatase from Aquifex pyrophilus.